The following is a 178-amino-acid chain: MSQAQENEHAGPAVPQTRTARHRRIVDILNRQPVRSQSQLAKLLADDGLSVTQATLSRDLDELNAVKIRNNDGDLIYAVPSEGGFRTPRVPLGESAKEERMRRLSAELLISAEASANLVVLRTPPGAAQFLASAIDQAELHDILGTIAGDDTLLLISREPTGGQALADHLLRLAQNHH.

Residues methionine 1–arginine 21 form a disordered region.

The protein belongs to the ArgR family.

It localises to the cytoplasm. Its pathway is amino-acid biosynthesis; L-arginine biosynthesis [regulation]. Regulates arginine biosynthesis genes. The sequence is that of Arginine repressor from Streptomyces avermitilis (strain ATCC 31267 / DSM 46492 / JCM 5070 / NBRC 14893 / NCIMB 12804 / NRRL 8165 / MA-4680).